Here is a 214-residue protein sequence, read N- to C-terminus: Ras-related protein Rab-11A (214 aa).

GTP-binding positions include 20 to 28, 39 to 45, 68 to 72, 126 to 129, and 156 to 158; these read GDSGVGKSN, SLETKST, DTAGQ, NKSD, and SAL. Positions 42 to 50 match the Effector region motif; the sequence is TKSTIGVEF. Residues C213 and C214 are each lipidated (S-geranylgeranyl cysteine).

This sequence belongs to the small GTPase superfamily. Rab family.

Its subcellular location is the contractile vacuole membrane. Functionally, required for normal contractile vacuole structure and function. Cells expressing a dominant negative rab11A exhibit a more extensive contractile vacuole network and enlarged contractile vacuole bladders. These cells exhibit a functional defect in osmotic regulation where cells immersed in water become rounded and detach from the surface, and contain swollen contractile vacuoles. This is Ras-related protein Rab-11A (rab11A) from Dictyostelium discoideum (Social amoeba).